Reading from the N-terminus, the 302-residue chain is Sulfate adenylyltransferase subunit 2 (302 aa).

A disordered region spans residues 280 to 302; the sequence is RQGRLIDSDQSASMEQKKRQGYF.

The protein belongs to the PAPS reductase family. CysD subfamily. Heterodimer composed of CysD, the smaller subunit, and CysN.

It catalyses the reaction sulfate + ATP + H(+) = adenosine 5'-phosphosulfate + diphosphate. Its pathway is sulfur metabolism; hydrogen sulfide biosynthesis; sulfite from sulfate: step 1/3. With CysN forms the ATP sulfurylase (ATPS) that catalyzes the adenylation of sulfate producing adenosine 5'-phosphosulfate (APS) and diphosphate, the first enzymatic step in sulfur assimilation pathway. APS synthesis involves the formation of a high-energy phosphoric-sulfuric acid anhydride bond driven by GTP hydrolysis by CysN coupled to ATP hydrolysis by CysD. This chain is Sulfate adenylyltransferase subunit 2, found in Shewanella oneidensis (strain ATCC 700550 / JCM 31522 / CIP 106686 / LMG 19005 / NCIMB 14063 / MR-1).